Here is a 315-residue protein sequence, read N- to C-terminus: tRNA pseudouridine synthase B (315 aa).

Catalysis depends on D54, which acts as the Nucleophile.

It belongs to the pseudouridine synthase TruB family. Type 1 subfamily.

It carries out the reaction uridine(55) in tRNA = pseudouridine(55) in tRNA. Responsible for synthesis of pseudouridine from uracil-55 in the psi GC loop of transfer RNAs. The chain is tRNA pseudouridine synthase B from Cupriavidus taiwanensis (strain DSM 17343 / BCRC 17206 / CCUG 44338 / CIP 107171 / LMG 19424 / R1) (Ralstonia taiwanensis (strain LMG 19424)).